A 382-amino-acid chain; its full sequence is Alanine racemase (382 aa).

The active-site Proton acceptor; specific for D-alanine is Lys37. Lys37 carries the N6-(pyridoxal phosphate)lysine modification. A substrate-binding site is contributed by Arg135. The active-site Proton acceptor; specific for L-alanine is the Tyr267. Met315 is a binding site for substrate.

Belongs to the alanine racemase family. Requires pyridoxal 5'-phosphate as cofactor.

The catalysed reaction is L-alanine = D-alanine. The protein operates within amino-acid biosynthesis; D-alanine biosynthesis; D-alanine from L-alanine: step 1/1. In terms of biological role, catalyzes the interconversion of L-alanine and D-alanine. May also act on other amino acids. The chain is Alanine racemase (alr) from Geobacter sulfurreducens (strain ATCC 51573 / DSM 12127 / PCA).